The sequence spans 362 residues: ATP synthase F(1) complex catalytic subunit beta, mitochondrial (362 aa).

N6-acetyllysine; alternate is present on Lys-14. Residue Lys-14 is modified to N6-succinyllysine; alternate. Lys-51 carries the N6-acetyllysine modification. 6 residues coordinate ADP: Val-62, Val-63, Gly-64, Lys-65, Thr-66, and Val-67. An ATP-binding site is contributed by Val-62. Positions 62, 63, 64, 65, and 66 each coordinate phosphate. Gly-64, Lys-65, Thr-66, and Val-67 together coordinate ATP. Position 66 (Thr-66) interacts with Mg(2+). Residue Glu-91 coordinates Mg(2+). N6-acetyllysine; alternate is present on residues Lys-112 and Lys-117. N6-succinyllysine; alternate occurs at positions 112 and 117. Thr-165 is modified (phosphothreonine). Position 279 is an N6-acetyllysine (Lys-279). Ser-286 is modified (phosphoserine). An N6-acetyllysine mark is found at Lys-333 and Lys-338.

This sequence belongs to the ATPase alpha/beta chains family. In terms of assembly, homotrimer. Component of the ATP synthase complex composed at least of ATP5F1A/subunit alpha, ATP5F1B/subunit beta, ATP5MC1/subunit c (homooctomer), MT-ATP6/subunit a, MT-ATP8/subunit 8, ATP5ME/subunit e, ATP5MF/subunit f, ATP5MG/subunit g, ATP5MK/subunit k, ATP5MJ/subunit j, ATP5F1C/subunit gamma, ATP5F1D/subunit delta, ATP5F1E/subunit epsilon, ATP5PF/subunit F6, ATP5PB/subunit b, ATP5PD/subunit d, ATP5PO/subunit OSCP. ATP synthase complex consists of a soluble F(1) head domain (subunits alpha(3) and beta(3)) - the catalytic core - and a membrane F(0) domain - the membrane proton channel (subunits c, a, 8, e, f, g, k and j). These two domains are linked by a central stalk (subunits gamma, delta, and epsilon) rotating inside the F1 region and a stationary peripheral stalk (subunits F6, b, d, and OSCP). Interacts with PPIF. Interacts with BCL2L1 isoform BCL-X(L); the interaction mediates the association of BCL2L1 isoform BCL-X(L) with the mitochondrial membrane F(1)F(0) ATP synthase and enhances neurons metabolic efficiency. Interacts with CLN5 and PPT1. Interacts with S100A1; this interaction increases F1-ATPase activity. Interacts with MTLN. Interacts with TTC5/STRAP; the interaction results in decreased mitochondrial ATP production.

It localises to the mitochondrion inner membrane. The enzyme catalyses ATP + H2O + 4 H(+)(in) = ADP + phosphate + 5 H(+)(out). In terms of biological role, catalytic subunit beta, of the mitochondrial membrane ATP synthase complex (F(1)F(0) ATP synthase or Complex V) that produces ATP from ADP in the presence of a proton gradient across the membrane which is generated by electron transport complexes of the respiratory chain. ATP synthase complex consist of a soluble F(1) head domain - the catalytic core - and a membrane F(1) domain - the membrane proton channel. These two domains are linked by a central stalk rotating inside the F(1) region and a stationary peripheral stalk. During catalysis, ATP synthesis in the catalytic domain of F(1) is coupled via a rotary mechanism of the central stalk subunits to proton translocation. In vivo, can only synthesize ATP although its ATP hydrolase activity can be activated artificially in vitro. With the subunit alpha (ATP5F1A), forms the catalytic core in the F(1) domain. This is ATP synthase F(1) complex catalytic subunit beta, mitochondrial from Mesocricetus auratus (Golden hamster).